The following is a 169-amino-acid chain: Cytochrome c-type biogenesis protein CcmE (169 aa).

Residues 1–7 (MTRKQRR) are Cytoplasmic-facing. The chain crosses the membrane as a helical; Signal-anchor for type II membrane protein span at residues 8–28 (MTIIGGSLAVLALAAALVLNA). Topologically, residues 29 to 169 (LRDSIVFFST…AQGNPQGAVR (141 aa)) are periplasmic. Heme contacts are provided by histidine 122 and tyrosine 126. Residues 143–169 (DDYGGKASDGVKPAATTAQGNPQGAVR) are disordered. Positions 158–169 (TTAQGNPQGAVR) are enriched in polar residues.

Belongs to the CcmE/CycJ family.

The protein resides in the cell inner membrane. Heme chaperone required for the biogenesis of c-type cytochromes. Transiently binds heme delivered by CcmC and transfers the heme to apo-cytochromes in a process facilitated by CcmF and CcmH. This chain is Cytochrome c-type biogenesis protein CcmE, found in Bradyrhizobium diazoefficiens (strain JCM 10833 / BCRC 13528 / IAM 13628 / NBRC 14792 / USDA 110).